A 228-amino-acid chain; its full sequence is Clathrin light chain B (228 aa).

A Blocked amino end (Met) modification is found at Met-1. A compositionally biased stretch (low complexity) spans 1-17; sequence MADDFGFFSSSESGAPE. Residues 1–80 form a disordered region; the sequence is MADDFGFFSS…VNGDVFQEAN (80 aa). Ser-11 and Ser-13 each carry phosphoserine. The involved in binding clathrin heavy chain stretch occupies residues 92–154; sequence ADRLTQEPES…QVEKNKINNR (63 aa). A Phosphothreonine modification is found at Thr-186. An intrachain disulfide couples Cys-198 to Cys-208. N6-acetyllysine is present on Lys-203. Phosphoserine is present on Ser-216.

This sequence belongs to the clathrin light chain family. As to quaternary structure, clathrin coats are formed from molecules containing 3 heavy chains and 3 light chains. Interacts (via N-terminus) with HIP1. Interacts with HIP1R.

Its subcellular location is the cytoplasmic vesicle membrane. It localises to the membrane. The protein resides in the coated pit. Its function is as follows. Clathrin is the major protein of the polyhedral coat of coated pits and vesicles. This chain is Clathrin light chain B (CLTB), found in Bos taurus (Bovine).